Consider the following 602-residue polypeptide: Elongation factor 4 (602 aa).

The 183-residue stretch at Asn7–Gln189 folds into the tr-type G domain. GTP contacts are provided by residues Asp19–Thr24 and Asn136–Asp139.

This sequence belongs to the TRAFAC class translation factor GTPase superfamily. Classic translation factor GTPase family. LepA subfamily.

The protein localises to the cell inner membrane. The catalysed reaction is GTP + H2O = GDP + phosphate + H(+). Its function is as follows. Required for accurate and efficient protein synthesis under certain stress conditions. May act as a fidelity factor of the translation reaction, by catalyzing a one-codon backward translocation of tRNAs on improperly translocated ribosomes. Back-translocation proceeds from a post-translocation (POST) complex to a pre-translocation (PRE) complex, thus giving elongation factor G a second chance to translocate the tRNAs correctly. Binds to ribosomes in a GTP-dependent manner. This Protochlamydia amoebophila (strain UWE25) protein is Elongation factor 4.